A 647-amino-acid polypeptide reads, in one-letter code: Neuronal PAS domain-containing protein 4-like (647 aa).

Positions 16 to 29 (KRFRSTKGASKARR) are basic motif; degenerate. The 52-residue stretch at 16 to 67 (KRFRSTKGASKARRDQMNSEIRNLRALLPISPEHRLSYLHSMSITCTYIRKS) folds into the bHLH domain. Residues 30–67 (DQMNSEIRNLRALLPISPEHRLSYLHSMSITCTYIRKS) form a helix-loop-helix motif region. PAS domains lie at 117 to 181 (VLQA…SPSG) and 238 to 274 (SADM…HPDD).

In terms of assembly, heterodimer; efficient DNA binding requires dimerization with another bHLH protein. As to expression, specifically expressed in endothelial and hematopoietic precursor cells.

It localises to the nucleus. Transcription factor specifically expressed in endothelial and hematopoietic precursor cells that acts as a key regulator of the endothelial differentiation cascade. Acts as an early-response transcription factor that regulates the expression of early regulators of endothelial and haematopoietic differentiation, such as etv2 and tal1. This is Neuronal PAS domain-containing protein 4-like from Danio rerio (Zebrafish).